Here is a 366-residue protein sequence, read N- to C-terminus: Dihydroorotate dehydrogenase (quinone) (366 aa).

FMN contacts are provided by residues Ala-74–Lys-78 and Thr-98. Lys-78 contacts substrate. Position 123–127 (Asn-123–Phe-127) interacts with substrate. FMN contacts are provided by Asn-156 and Asn-189. Asn-189 contributes to the substrate binding site. The active-site Nucleophile is the Ser-192. Asn-194 is a binding site for substrate. 2 residues coordinate FMN: Lys-231 and Thr-259. Substrate is bound at residue Asn-260 to Thr-261. FMN is bound by residues Gly-285, Gly-314, and Tyr-335 to Thr-336.

Belongs to the dihydroorotate dehydrogenase family. Type 2 subfamily. Monomer. FMN is required as a cofactor.

The protein localises to the cell membrane. The enzyme catalyses (S)-dihydroorotate + a quinone = orotate + a quinol. The protein operates within pyrimidine metabolism; UMP biosynthesis via de novo pathway; orotate from (S)-dihydroorotate (quinone route): step 1/1. Its function is as follows. Catalyzes the conversion of dihydroorotate to orotate with quinone as electron acceptor. This Kineococcus radiotolerans (strain ATCC BAA-149 / DSM 14245 / SRS30216) protein is Dihydroorotate dehydrogenase (quinone).